The primary structure comprises 389 residues: Probable tRNA pseudouridine synthase D 1 (389 aa).

Asp63 (nucleophile) is an active-site residue. Residues 135–345 (GAPNYYDDQR…KYTKRPIISI (211 aa)) form the TRUD domain.

This sequence belongs to the pseudouridine synthase TruD family.

The catalysed reaction is uridine(13) in tRNA = pseudouridine(13) in tRNA. Could be responsible for synthesis of pseudouridine from uracil-13 in transfer RNAs. In Methanococcus maripaludis (strain DSM 14266 / JCM 13030 / NBRC 101832 / S2 / LL), this protein is Probable tRNA pseudouridine synthase D 1 (truD1).